We begin with the raw amino-acid sequence, 286 residues long: uncharacterized protein (286 aa).

The protein belongs to the NmrA-type oxidoreductase family.

This is an uncharacterized protein from Bacillus subtilis (strain 168).